The chain runs to 153 residues: Probable succinate transporter subunit YjjB (153 aa).

Helical transmembrane passes span Trp7–Phe27, Met51–Ile71, Val83–Ile103, and Phe125–Trp145.

It belongs to the ThrE exporter (TC 2.A.79) family. As to quaternary structure, the transporter is composed of YjjB and YjjP.

The protein localises to the cell inner membrane. In terms of biological role, involved in succinate export with YjjP. Both proteins are required for export. The protein is Probable succinate transporter subunit YjjB of Yersinia pestis bv. Antiqua (strain Antiqua).